The sequence spans 348 residues: N-acetyl-gamma-glutamyl-phosphate reductase (348 aa).

The active site involves C150.

This sequence belongs to the NAGSA dehydrogenase family. Type 1 subfamily.

It is found in the cytoplasm. It catalyses the reaction N-acetyl-L-glutamate 5-semialdehyde + phosphate + NADP(+) = N-acetyl-L-glutamyl 5-phosphate + NADPH + H(+). It functions in the pathway amino-acid biosynthesis; L-arginine biosynthesis; N(2)-acetyl-L-ornithine from L-glutamate: step 3/4. Functionally, catalyzes the NADPH-dependent reduction of N-acetyl-5-glutamyl phosphate to yield N-acetyl-L-glutamate 5-semialdehyde. The protein is N-acetyl-gamma-glutamyl-phosphate reductase of Symbiobacterium thermophilum (strain DSM 24528 / JCM 14929 / IAM 14863 / T).